A 241-amino-acid polypeptide reads, in one-letter code: 2-C-methyl-D-erythritol 4-phosphate cytidylyltransferase (241 aa).

It belongs to the IspD/TarI cytidylyltransferase family. IspD subfamily.

The catalysed reaction is 2-C-methyl-D-erythritol 4-phosphate + CTP + H(+) = 4-CDP-2-C-methyl-D-erythritol + diphosphate. The protein operates within isoprenoid biosynthesis; isopentenyl diphosphate biosynthesis via DXP pathway; isopentenyl diphosphate from 1-deoxy-D-xylulose 5-phosphate: step 2/6. In terms of biological role, catalyzes the formation of 4-diphosphocytidyl-2-C-methyl-D-erythritol from CTP and 2-C-methyl-D-erythritol 4-phosphate (MEP). In Shewanella denitrificans (strain OS217 / ATCC BAA-1090 / DSM 15013), this protein is 2-C-methyl-D-erythritol 4-phosphate cytidylyltransferase.